The chain runs to 198 residues: NAD(P)H dehydrogenase (quinone) (198 aa).

One can recognise a Flavodoxin-like domain in the interval 4-189; the sequence is ILVLYYSMYG…SIARYQGEYV (186 aa). FMN contacts are provided by residues 10–15 and 78–80; these read SMYGHI and TRF. NAD(+) is bound at residue Tyr12. Residue Trp98 coordinates substrate. Residues 113 to 118 and His133 each bind FMN; that span reads STGTGG.

This sequence belongs to the WrbA family. The cofactor is FMN.

It catalyses the reaction a quinone + NADH + H(+) = a quinol + NAD(+). It carries out the reaction a quinone + NADPH + H(+) = a quinol + NADP(+). This Citrobacter koseri (strain ATCC BAA-895 / CDC 4225-83 / SGSC4696) protein is NAD(P)H dehydrogenase (quinone).